Consider the following 172-residue polypeptide: Alpha-crystallin A chain (172 aa).

Met-1 carries the N-acetylmethionine modification. The interval 1 to 63 (MDVTIQHPWF…RTVLDSGISE (63 aa)) is required for complex formation with BFSP1 and BFSP2. Gln-6 carries the deamidated glutamine; partial modification. Position 45 is a phosphoserine (Ser-45). Gln-50 carries the post-translational modification Deamidated glutamine; partial. Residues 52–163 (LFRTVLDSGI…HERAIPVARE (112 aa)) enclose the sHSP domain. Lys-70 is subject to N6-acetyllysine. Deamidated glutamine; partial is present on Gln-90. Lys-99 bears the N6-acetyllysine mark. Position 100 (His-100) interacts with Zn(2+). Asn-101 carries the post-translational modification Deamidated asparagine; partial. Residues Glu-102 and His-107 each contribute to the Zn(2+) site. Ser-122 is subject to Phosphoserine. A Deamidated asparagine; partial modification is found at Asn-123. Position 147 is a deamidated glutamine; partial (Gln-147). A Zn(2+)-binding site is contributed by His-154. Ser-168 carries an O-linked (GlcNAc) serine glycan.

The protein belongs to the small heat shock protein (HSP20) family. As to quaternary structure, heteromer composed of three CRYAA and one CRYAB subunits. Inter-subunit bridging via zinc ions enhances stability, which is crucial as there is no protein turn over in the lens. Can also form homodimers and homotetramers (dimers of dimers) which serve as the building blocks of homooligomers. Within homooligomers, the zinc-binding motif is created from residues of 3 different molecules. His-100 and Glu-102 from one molecule are ligands of the zinc ion, and His-107 and His-154 residues from additional molecules complete the site with tetrahedral coordination geometry. Part of a complex required for lens intermediate filament formation composed of BFSP1, BFSP2 and CRYAA. Acetylation at Lys-70 may increase chaperone activity. In terms of processing, undergoes age-dependent proteolytical cleavage at the C-terminus.

The protein localises to the cytoplasm. The protein resides in the nucleus. Contributes to the transparency and refractive index of the lens. Acts as a chaperone, preventing aggregation of various proteins under a wide range of stress conditions. Required for the correct formation of lens intermediate filaments as part of a complex composed of BFSP1, BFSP2 and CRYAA. This is Alpha-crystallin A chain (CRYAA) from Macaca mulatta (Rhesus macaque).